The chain runs to 895 residues: Catenin alpha-3 (895 aa).

Residue Ser-56 is modified to Phosphoserine. Positions 74–111 form a coiled coil; the sequence is EKIAQEATVLKDELTASLEEVRKESEALKVSAERFTDD. Position 160 is a phosphoserine (Ser-160). Positions 325–379 form a coiled coil; sequence RERIIAECNAIRQALQDLLSEYMNNAGKKERSNTLNIALDNMCKKTRDLRRQLRK. Phosphoserine is present on residues Ser-637 and Ser-647. Position 649 is a phosphothreonine (Thr-649).

Belongs to the vinculin/alpha-catenin family. Interacts with CTNNB1. Interacts with PKP2. Predominantly expressed in heart and testis. Expressed at lower levels in brain, kidney, liver and skeletal muscle.

The protein resides in the cytoplasm. It is found in the cytoskeleton. The protein localises to the cell junction. It localises to the desmosome. In terms of biological role, may be involved in formation of stretch-resistant cell-cell adhesion complexes. This is Catenin alpha-3 from Homo sapiens (Human).